Consider the following 86-residue polypeptide: Large ribosomal subunit protein eL30 (86 aa).

Belongs to the eukaryotic ribosomal protein eL30 family.

In Archaeoglobus fulgidus (strain ATCC 49558 / DSM 4304 / JCM 9628 / NBRC 100126 / VC-16), this protein is Large ribosomal subunit protein eL30 (rpl30e).